A 343-amino-acid chain; its full sequence is Glyceraldehyde-3-phosphate dehydrogenase (343 aa).

NAD(+) is bound by residues 12-13 and Gly-114; that span reads SI. 143-145 is a binding site for D-glyceraldehyde 3-phosphate; it reads SCN. Cys-144 (nucleophile) is an active-site residue. Residue Arg-172 participates in NAD(+) binding. 198–199 is a D-glyceraldehyde 3-phosphate binding site; it reads HG. Gln-307 provides a ligand contact to NAD(+).

Belongs to the glyceraldehyde-3-phosphate dehydrogenase family. In terms of assembly, homotetramer.

It localises to the cytoplasm. The enzyme catalyses D-glyceraldehyde 3-phosphate + phosphate + NADP(+) = (2R)-3-phospho-glyceroyl phosphate + NADPH + H(+). It catalyses the reaction D-glyceraldehyde 3-phosphate + phosphate + NAD(+) = (2R)-3-phospho-glyceroyl phosphate + NADH + H(+). Its pathway is carbohydrate degradation; glycolysis; pyruvate from D-glyceraldehyde 3-phosphate: step 1/5. The protein is Glyceraldehyde-3-phosphate dehydrogenase (gap) of Methanocaldococcus jannaschii (strain ATCC 43067 / DSM 2661 / JAL-1 / JCM 10045 / NBRC 100440) (Methanococcus jannaschii).